Here is a 163-residue protein sequence, read N- to C-terminus: Lipoprotein signal peptidase (163 aa).

The next 3 helical transmembrane spans lie at 11–31 (ILIA…IATT), 63–83 (KMTF…YFFI), and 88–108 (YNLF…GNFI). Catalysis depends on residues Asp118 and Asp136. The helical transmembrane segment at 131–151 (IFNIADSSLTIGVILIIIALL) threads the bilayer.

It belongs to the peptidase A8 family.

It is found in the cell membrane. The catalysed reaction is Release of signal peptides from bacterial membrane prolipoproteins. Hydrolyzes -Xaa-Yaa-Zaa-|-(S,diacylglyceryl)Cys-, in which Xaa is hydrophobic (preferably Leu), and Yaa (Ala or Ser) and Zaa (Gly or Ala) have small, neutral side chains.. Its pathway is protein modification; lipoprotein biosynthesis (signal peptide cleavage). Functionally, this protein specifically catalyzes the removal of signal peptides from prolipoproteins. This Staphylococcus aureus protein is Lipoprotein signal peptidase.